The chain runs to 513 residues: Maturase K (513 aa).

The protein belongs to the intron maturase 2 family. MatK subfamily.

The protein localises to the plastid. Its subcellular location is the chloroplast. Usually encoded in the trnK tRNA gene intron. Probably assists in splicing its own and other chloroplast group II introns. The polypeptide is Maturase K (Sporobolus michauxianus (Prairie cordgrass)).